Here is a 117-residue protein sequence, read N- to C-terminus: Tyrosine-protein phosphatase 25 (117 aa).

A Tyrosine-protein phosphatase domain is found at 1-117 (WLMIIEQKCN…DLIGQSPIVV (117 aa)). Substrate is bound at residue Asp85.

This sequence belongs to the protein-tyrosine phosphatase family.

It catalyses the reaction O-phospho-L-tyrosyl-[protein] + H2O = L-tyrosyl-[protein] + phosphate. The polypeptide is Tyrosine-protein phosphatase 25 (STY-25) (Styela plicata (Wrinkled sea squirt)).